A 127-amino-acid polypeptide reads, in one-letter code: Large ribosomal subunit protein uL18 (127 aa).

Belongs to the universal ribosomal protein uL18 family. In terms of assembly, part of the 50S ribosomal subunit; part of the 5S rRNA/L5/L18/L25 subcomplex. Contacts the 5S and 23S rRNAs.

This is one of the proteins that bind and probably mediate the attachment of the 5S RNA into the large ribosomal subunit, where it forms part of the central protuberance. The chain is Large ribosomal subunit protein uL18 from Streptomyces griseus subsp. griseus (strain JCM 4626 / CBS 651.72 / NBRC 13350 / KCC S-0626 / ISP 5235).